Reading from the N-terminus, the 409-residue chain is Imidazolonepropionase (409 aa).

Positions 70 and 72 each coordinate Fe(3+). Zn(2+) is bound by residues His70 and His72. 4-imidazolone-5-propanoate-binding residues include Arg79, Tyr137, and His164. Residue Tyr137 coordinates N-formimidoyl-L-glutamate. His225 serves as a coordination point for Fe(3+). Position 225 (His225) interacts with Zn(2+). Gln228 contacts 4-imidazolone-5-propanoate. Asn314 and Gly316 together coordinate N-formimidoyl-L-glutamate. Thr317 contributes to the 4-imidazolone-5-propanoate binding site.

The protein belongs to the metallo-dependent hydrolases superfamily. HutI family. It depends on Zn(2+) as a cofactor. Fe(3+) is required as a cofactor.

It is found in the cytoplasm. It catalyses the reaction 4-imidazolone-5-propanoate + H2O = N-formimidoyl-L-glutamate. The protein operates within amino-acid degradation; L-histidine degradation into L-glutamate; N-formimidoyl-L-glutamate from L-histidine: step 3/3. In terms of biological role, catalyzes the hydrolytic cleavage of the carbon-nitrogen bond in imidazolone-5-propanoate to yield N-formimidoyl-L-glutamate. It is the third step in the universal histidine degradation pathway. This chain is Imidazolonepropionase, found in Paenarthrobacter aurescens (strain TC1).